The following is a 34-amino-acid chain: Photosystem II reaction center protein M (34 aa).

Residues 5 to 25 (ILAFIATALFILIPTAFLLII) traverse the membrane as a helical segment.

The protein belongs to the PsbM family. As to quaternary structure, PSII is composed of 1 copy each of membrane proteins PsbA, PsbB, PsbC, PsbD, PsbE, PsbF, PsbH, PsbI, PsbJ, PsbK, PsbL, PsbM, PsbT, PsbX, PsbY, PsbZ, Psb30/Ycf12, at least 3 peripheral proteins of the oxygen-evolving complex and a large number of cofactors. It forms dimeric complexes.

It localises to the plastid. Its subcellular location is the chloroplast thylakoid membrane. Functionally, one of the components of the core complex of photosystem II (PSII). PSII is a light-driven water:plastoquinone oxidoreductase that uses light energy to abstract electrons from H(2)O, generating O(2) and a proton gradient subsequently used for ATP formation. It consists of a core antenna complex that captures photons, and an electron transfer chain that converts photonic excitation into a charge separation. This subunit is found at the monomer-monomer interface. This chain is Photosystem II reaction center protein M, found in Agrostis stolonifera (Creeping bentgrass).